We begin with the raw amino-acid sequence, 606 residues long: Protein spire homolog 2 (606 aa).

A KIND domain is found at 21–219 (LSLEEVLKSY…RALFLETLEL (199 aa)). The disordered stretch occupies residues 147-181 (KHCGSNAAKDEGYSGQDEEEEEEEEEEEEGAGRGI). The span at 162-175 (QDEEEEEEEEEEEE) shows a compositional bias: acidic residues. 2 WH2 domains span residues 263-277 (QLMKELRQGVKLKKV) and 357-374 (LHDRVLAEIRQDHKLRPV). 2 disordered regions span residues 438 to 464 (DEDSPDGVDMRRVESSPTPLKRDRSFS) and 517 to 537 (CRSLSSDDRSSDPGGDSASHG). Over residues 445 to 464 (VDMRRVESSPTPLKRDRSFS) the composition is skewed to basic and acidic residues. The segment at 554–574 (LALTVDGVINVRRILVKAEME) is spir-box.

It belongs to the spire family.

The protein localises to the cytoplasm. It localises to the cytoskeleton. Its subcellular location is the cytosol. The protein resides in the cell membrane. It is found in the cytoplasmic vesicle membrane. Acts as an actin nucleation factor, remains associated with the slow-growing pointed end of the new filament. Involved in intracellular vesicle transport along actin fibers, providing a novel link between actin cytoskeleton dynamics and intracellular transport. Required for asymmetric spindle positioning and asymmetric cell division during oocyte meiosis. Required for normal formation of the cleavage furrow and for polar body extrusion during female germ cell meiosis. Also acts in the nucleus: together with SPIRE1 and SPIRE2, promotes assembly of nuclear actin filaments in response to DNA damage in order to facilitate movement of chromatin and repair factors after DNA damage. The polypeptide is Protein spire homolog 2 (spire2) (Danio rerio (Zebrafish)).